Here is a 171-residue protein sequence, read N- to C-terminus: Calcium-binding allergen Ole e 8 (171 aa).

4 EF-hand domains span residues 16-51 (QEPNEVQGVFNRFDANGDGKISGDELAGVLKALGSN), 52-87 (TSKEEIGRIMEEIDTDKDGFINVQEFAAFVKAETDP), 92-127 (GGENELKEAFELYDQDHNGLISSVELHKILTRLGER), and 128-163 (YAEHDCVEMIKSVDSDGDGYVSFEEFKKMMTNKSGN). Ca(2+) contacts are provided by aspartate 29, asparagine 31, aspartate 33, lysine 35, glutamate 40, aspartate 65, aspartate 67, aspartate 69, glutamate 76, aspartate 105, aspartate 107, asparagine 109, glutamate 116, aspartate 141, aspartate 143, aspartate 145, tyrosine 147, and glutamate 152.

In terms of assembly, homodimer. As to expression, expressed in pollen.

The chain is Calcium-binding allergen Ole e 8 from Olea europaea (Common olive).